A 432-amino-acid polypeptide reads, in one-letter code: Enolase (432 aa).

Position 167 (glutamine 167) interacts with (2R)-2-phosphoglycerate. The active-site Proton donor is glutamate 209. Mg(2+) is bound by residues aspartate 246, glutamate 290, and aspartate 317. 4 residues coordinate (2R)-2-phosphoglycerate: lysine 342, arginine 371, serine 372, and lysine 393. Lysine 342 (proton acceptor) is an active-site residue.

This sequence belongs to the enolase family. As to quaternary structure, component of the RNA degradosome, a multiprotein complex involved in RNA processing and mRNA degradation. Requires Mg(2+) as cofactor.

The protein localises to the cytoplasm. It localises to the secreted. The protein resides in the cell surface. It catalyses the reaction (2R)-2-phosphoglycerate = phosphoenolpyruvate + H2O. The protein operates within carbohydrate degradation; glycolysis; pyruvate from D-glyceraldehyde 3-phosphate: step 4/5. Functionally, catalyzes the reversible conversion of 2-phosphoglycerate (2-PG) into phosphoenolpyruvate (PEP). It is essential for the degradation of carbohydrates via glycolysis. The chain is Enolase from Klebsiella pneumoniae (strain 342).